The chain runs to 318 residues: MNIIDRFKEKILSGELISKKEAIILSKENVDKLASAANDIRMSLCGKKFNLCTIINGKSGRCGENCKYCAQSVYFKTDIEEYNLLDSESIITSAISNYNSGVHRFSVVTSGKKLTNKEIDIVCKTYSEVQEKCAIKLCASHGLLNYEELVKLKESGVIRYHNNLETSRRFFSNICTTHTFDEKINTIKNALKAGLQVCSGGIIGLGETMEDRIDMAFTLRELNVDSIPINILNPIKGTALENQEKLSYDEITKTFALFRFILPEKQIRLAGGRALLNDKGERLMKSGVNSAISGDMLTTSGIKTFDDIKMIKELGFEV.

Residues 44–273 (LCGKKFNLCT…EKQIRLAGGR (230 aa)) form the Radical SAM core domain. Residues Cys-62, Cys-66, and Cys-69 each coordinate [4Fe-4S] cluster. Residues Ser-106, Cys-138, Cys-198, and Arg-268 each contribute to the [2Fe-2S] cluster site.

It belongs to the radical SAM superfamily. Biotin synthase family. In terms of assembly, homodimer. The cofactor is [4Fe-4S] cluster. It depends on [2Fe-2S] cluster as a cofactor.

It catalyses the reaction (4R,5S)-dethiobiotin + (sulfur carrier)-SH + 2 reduced [2Fe-2S]-[ferredoxin] + 2 S-adenosyl-L-methionine = (sulfur carrier)-H + biotin + 2 5'-deoxyadenosine + 2 L-methionine + 2 oxidized [2Fe-2S]-[ferredoxin]. The protein operates within cofactor biosynthesis; biotin biosynthesis; biotin from 7,8-diaminononanoate: step 2/2. Catalyzes the conversion of dethiobiotin (DTB) to biotin by the insertion of a sulfur atom into dethiobiotin via a radical-based mechanism. The sequence is that of Biotin synthase from Clostridium botulinum (strain Alaska E43 / Type E3).